Here is a 488-residue protein sequence, read N- to C-terminus: PTS system mannitol-specific EIICB component (488 aa).

Residues M1–I26 are Cytoplasmic-facing. One can recognise a PTS EIIC type-2 domain in the interval L15–K362. The chain crosses the membrane as a helical span at residues I27–D48. The Extracellular portion of the chain corresponds to K49–A52. Residues L53–K73 form a helical membrane-spanning segment. Over K74 to F147 the chain is Cytoplasmic. Residues Y148–G169 form a helical membrane-spanning segment. Residues Y170 to L178 lie on the Extracellular side of the membrane. The helical transmembrane segment at V179–K199 threads the bilayer. The Cytoplasmic segment spans residues V200 to A289. Residues T290–I309 form a helical membrane-spanning segment. The Extracellular segment spans residues A310–V331. Residues A332–L353 traverse the membrane as a helical segment. Residues S354–N488 lie on the Cytoplasmic side of the membrane. Residues S397–N488 form the PTS EIIB type-2 domain. The active-site Phosphocysteine intermediate; for EIIB activity is C403. At C403 the chain carries Phosphocysteine; by EIIA.

As to quaternary structure, homodimer.

Its subcellular location is the cell membrane. It catalyses the reaction D-mannitol(out) + N(pros)-phospho-L-histidyl-[protein] = D-mannitol 1-phosphate(in) + L-histidyl-[protein]. In terms of biological role, the phosphoenolpyruvate-dependent sugar phosphotransferase system (sugar PTS), a major carbohydrate active transport system, catalyzes the phosphorylation of incoming sugar substrates concomitantly with their translocation across the cell membrane. The enzyme II CmtAB PTS system is involved in D-mannitol transport. This chain is PTS system mannitol-specific EIICB component (mtlA), found in Mycoplasma pneumoniae (strain ATCC 29342 / M129 / Subtype 1) (Mycoplasmoides pneumoniae).